The sequence spans 368 residues: Tubby-like F-box protein 2 (368 aa).

A compositionally biased stretch (low complexity) spans 1–17; the sequence is MVPWRRSSSSSSAPSSR. The tract at residues 1–44 is disordered; the sequence is MVPWRRSSSSSSAPSSRPARRPARTNARVSPDVSSELSPLAGEE. The region spanning 49–104 is the F-box domain; the sequence is ERWSALVPDLLADILRCVEAGSERWPPRRDVVACASVCRRWRDVAVAVVQPPLESG.

The protein belongs to the TUB family. In terms of tissue distribution, expressed in stems, leaves, flowers and seeds.

The polypeptide is Tubby-like F-box protein 2 (TULP2) (Oryza sativa subsp. japonica (Rice)).